The primary structure comprises 194 residues: Large ribosomal subunit protein bL25 (194 aa).

This sequence belongs to the bacterial ribosomal protein bL25 family. CTC subfamily. In terms of assembly, part of the 50S ribosomal subunit; part of the 5S rRNA/L5/L18/L25 subcomplex. Contacts the 5S rRNA. Binds to the 5S rRNA independently of L5 and L18.

Its function is as follows. This is one of the proteins that binds to the 5S RNA in the ribosome where it forms part of the central protuberance. The chain is Large ribosomal subunit protein bL25 from Thermobifida fusca (strain YX).